A 231-amino-acid chain; its full sequence is Cytochrome c oxidase assembly factor 7 (231 aa).

Ala-2 is modified (N-acetylalanine). Sel1-like repeat units lie at residues 34 to 66 (PDGC…EENQ), 68 to 104 (SDSC…EKPG), 108 to 146 (IAAC…DGGY), 147 to 183 (TSSC…DLGH), and 184 to 219 (IWAC…QLHK).

The protein belongs to the hcp beta-lactamase family. As to quaternary structure, interacts with CHCHD4/MIA40 through transient intermolecular disulfide bonds.

It localises to the mitochondrion intermembrane space. Required for assembly of mitochondrial respiratory chain complex I and complex IV. The sequence is that of Cytochrome c oxidase assembly factor 7 (COA7) from Homo sapiens (Human).